Consider the following 566-residue polypeptide: Myo-inositol transporter 1A (566 aa).

Over 1 to 64 the chain is Cytoplasmic; the sequence is MSDEKNYGIS…ERTEKLTKFV (64 aa). A helical transmembrane segment spans residues 65-85; the sequence is VGLALFASVSGFCFGFDTGVI. The Extracellular segment spans residues 86–106; the sequence is SAALVSIKDDFGHILDDTEKE. Residues 107-127 traverse the membrane as a helical segment; that stretch reads WISAATSCGALVGALSSGALA. Over 128-140 the chain is Cytoplasmic; the sequence is DRVGRKWTLAVGD. A helical membrane pass occupies residues 141-161; it reads VWFTLGAIIICSSFSVVQMIV. The Extracellular segment spans residues 162-163; it reads GR. The helical transmembrane segment at 164–184 threads the bilayer; that stretch reads AVLGLGVGTAAAIAPLYIAEV. The Cytoplasmic portion of the chain corresponds to 185-192; that stretch reads APTRFRGA. The chain crosses the membrane as a helical span at residues 193–213; that stretch reads LVTVQSIAITGGQFFSYCIGI. Residues 214 to 222 are Extracellular-facing; sequence PLTGHNGWR. A helical membrane pass occupies residues 223–243; sequence IQFAIGIVPAVVQAAVVHFLP. Over 244-313 the chain is Cytoplasmic; that stretch reads ESPRYDLLRG…VLTEGKYRKP (70 aa). The helical transmembrane segment at 314–334 threads the bilayer; sequence AITALGIGIFQQLCGFNSLMY. The Extracellular portion of the chain corresponds to 335–349; the sequence is YAATIFSYAGFDNPT. Residues 350-370 form a helical membrane-spanning segment; the sequence is SVGLIVSGTNWFFTFVAMMIL. At 371–377 the chain is on the cytoplasmic side; it reads DRVGKRR. A helical transmembrane segment spans residues 378-398; it reads ILLSTYPGMIAGLALASVAFW. The Extracellular segment spans residues 399 to 421; that stretch reads KMTGSTGHRLVEGTEYPQQWSNM. The helical transmembrane segment at 422–442 threads the bilayer; the sequence is MLGMMVVFIAFYATGSGNITW. The Cytoplasmic portion of the chain corresponds to 443 to 458; it reads TVGEMFPLEMRGIGAS. The helical transmembrane segment at 459–479 threads the bilayer; that stretch reads ILAGGVWAANIVISATFLTLM. Residues 480-485 lie on the Extracellular side of the membrane; the sequence is NAIGPT. A helical transmembrane segment spans residues 486 to 506; that stretch reads PTFALYAGICLAGLIFIYFCY. Residues 507-566 lie on the Cytoplasmic side of the membrane; sequence PEPSGLSLEEIQIIYNYGFGVQKSREIRAEHKLKAQEMRDRANSHIGGSATASDDQLNKV. The segment at 546-566 is disordered; it reads DRANSHIGGSATASDDQLNKV. Over residues 556–566 the composition is skewed to polar residues; that stretch reads ATASDDQLNKV.

Belongs to the major facilitator superfamily. Sugar transporter (TC 2.A.1.1) family.

It is found in the cell membrane. The catalysed reaction is myo-inositol(out) + H(+)(out) = myo-inositol(in) + H(+)(in). Functionally, major transporter for myo-inositol. Plays a role in the traversal of the host blood-brain barrier. This chain is Myo-inositol transporter 1A, found in Cryptococcus neoformans var. grubii serotype A (strain H99 / ATCC 208821 / CBS 10515 / FGSC 9487) (Filobasidiella neoformans var. grubii).